Reading from the N-terminus, the 438-residue chain is 23S rRNA (uracil(1939)-C(5))-methyltransferase RlmD (438 aa).

The 59-residue stretch at 10-68 folds into the TRAM domain; it reads RVTTRQTITVKVHDLDSFGQGVAHHNGKALFVQGALPDEVAEVSIIEDKRHFSRGVATR. [4Fe-4S] cluster contacts are provided by Cys81, Cys87, Cys90, and Cys168. Residues Gln271, Phe300, Asn305, Glu321, Asn348, and Asp369 each coordinate S-adenosyl-L-methionine. Residue Cys395 is the Nucleophile of the active site.

The protein belongs to the class I-like SAM-binding methyltransferase superfamily. RNA M5U methyltransferase family. RlmD subfamily.

It carries out the reaction uridine(1939) in 23S rRNA + S-adenosyl-L-methionine = 5-methyluridine(1939) in 23S rRNA + S-adenosyl-L-homocysteine + H(+). Functionally, catalyzes the formation of 5-methyl-uridine at position 1939 (m5U1939) in 23S rRNA. The chain is 23S rRNA (uracil(1939)-C(5))-methyltransferase RlmD from Erwinia tasmaniensis (strain DSM 17950 / CFBP 7177 / CIP 109463 / NCPPB 4357 / Et1/99).